A 276-amino-acid polypeptide reads, in one-letter code: 2-dehydro-3-deoxyphosphooctonate aldolase (276 aa).

This sequence belongs to the KdsA family.

It is found in the cytoplasm. It carries out the reaction D-arabinose 5-phosphate + phosphoenolpyruvate + H2O = 3-deoxy-alpha-D-manno-2-octulosonate-8-phosphate + phosphate. It participates in carbohydrate biosynthesis; 3-deoxy-D-manno-octulosonate biosynthesis; 3-deoxy-D-manno-octulosonate from D-ribulose 5-phosphate: step 2/3. The protein operates within bacterial outer membrane biogenesis; lipopolysaccharide biosynthesis. In Xanthomonas euvesicatoria pv. vesicatoria (strain 85-10) (Xanthomonas campestris pv. vesicatoria), this protein is 2-dehydro-3-deoxyphosphooctonate aldolase.